The primary structure comprises 200 residues: MKEIYLIGLGNPGKKFLNSRHNIGFLLLEYFSKKYNSNFLFKDKLKSSYSEFQIDNSSYRLFLPNTFMNNSGYAVRAIVDWYKINLDQIFIIVDDKDLPLGKIRFRRKGSSGGHNGLKSIIEQLQTQKFKRIRIGIGSPPPIKGEKNFNTISHVLGNISLEEKSILDKVFRRVIESLEKLNTKKEEYIINELNSFDKDQH.

Position 16 (F16) interacts with tRNA. H21 acts as the Proton acceptor in catalysis. Positions 67, 69, and 115 each coordinate tRNA.

The protein belongs to the PTH family. As to quaternary structure, monomer.

It localises to the cytoplasm. The catalysed reaction is an N-acyl-L-alpha-aminoacyl-tRNA + H2O = an N-acyl-L-amino acid + a tRNA + H(+). In terms of biological role, hydrolyzes ribosome-free peptidyl-tRNAs (with 1 or more amino acids incorporated), which drop off the ribosome during protein synthesis, or as a result of ribosome stalling. Its function is as follows. Catalyzes the release of premature peptidyl moieties from peptidyl-tRNA molecules trapped in stalled 50S ribosomal subunits, and thus maintains levels of free tRNAs and 50S ribosomes. This chain is Peptidyl-tRNA hydrolase, found in Prochlorococcus marinus (strain MIT 9215).